The chain runs to 288 residues: Probable proteasome subunit alpha type-7 (288 aa).

An N-acetylthreonine modification is found at threonine 2. The interval 247–288 is disordered; the sequence is INGDDDEDEDDSDNVMSSDDENAPVATNANATTDQEGDIHLE. A compositionally biased stretch (acidic residues) spans 249–268; the sequence is GDDDEDEDDSDNVMSSDDEN. Low complexity predominate over residues 269–279; that stretch reads APVATNANATT.

It belongs to the peptidase T1A family. In terms of assembly, the 26S proteasome consists of a 20S proteasome core and two 19S regulatory subunits. The 20S proteasome core is composed of 28 subunits that are arranged in four stacked rings, resulting in a barrel-shaped structure. The two end rings are each formed by seven alpha subunits, and the two central rings are each formed by seven beta subunits. The catalytic chamber with the active sites is on the inside of the barrel. In terms of processing, the alpha and beta forms are probably products of the same gene with different post-translational modifications.

The protein localises to the cytoplasm. The protein resides in the nucleus. Its function is as follows. The proteasome degrades poly-ubiquitinated proteins in the cytoplasm and in the nucleus. It is essential for the regulated turnover of proteins and for the removal of misfolded proteins. The proteasome is a multicatalytic proteinase complex that is characterized by its ability to cleave peptides with Arg, Phe, Tyr, Leu, and Glu adjacent to the leaving group at neutral or slightly basic pH. It has an ATP-dependent proteolytic activity. This chain is Probable proteasome subunit alpha type-7 (PRE10), found in Saccharomyces cerevisiae (strain ATCC 204508 / S288c) (Baker's yeast).